Consider the following 385-residue polypeptide: Cytochrome b (385 aa).

4 helical membrane-spanning segments follow: residues 32–52 (FGSL…TLAM), 76–98 (WLIR…LHIG), 113–133 (AWIL…LGYV), and 179–199 (FFAL…MHLI). Residues His-82 and His-96 each coordinate heme b. Positions 183 and 197 each coordinate heme b. A ubiquinone is bound at residue His-202. The next 4 helical transmembrane spans lie at 226–246 (YLFK…IFVF), 290–310 (LLGV…PKTD), 322–342 (LSKI…QLGA), and 349–369 (FIEF…IIMP).

It belongs to the cytochrome b family. In terms of assembly, fungal cytochrome b-c1 complex contains 10 subunits; 3 respiratory subunits, 2 core proteins and 5 low-molecular weight proteins. Cytochrome b-c1 complex is a homodimer. The cofactor is heme b.

It is found in the mitochondrion inner membrane. In terms of biological role, component of the ubiquinol-cytochrome c reductase complex (complex III or cytochrome b-c1 complex) that is part of the mitochondrial respiratory chain. The b-c1 complex mediates electron transfer from ubiquinol to cytochrome c. Contributes to the generation of a proton gradient across the mitochondrial membrane that is then used for ATP synthesis. The protein is Cytochrome b (cob) of Akanthomyces muscarius (Entomopathogenic fungus).